The primary structure comprises 307 residues: Small ribosomal subunit biogenesis GTPase RsgA (307 aa).

A disordered region spans residues 1-21 (MPSEHPFSDGISTPNPKETMN). The span at 10-21 (GISTPNPKETMN) shows a compositional bias: polar residues. Residues 85-242 (RQDAWKTKLI…LIDSPGLQEF (158 aa)) enclose the CP-type G domain. GTP contacts are provided by residues 135-138 (NKAD) and 184-192 (GQSGMGKST). Zn(2+) is bound by residues Cys-266, Cys-271, His-273, and Cys-279.

It belongs to the TRAFAC class YlqF/YawG GTPase family. RsgA subfamily. Monomer. Associates with 30S ribosomal subunit, binds 16S rRNA. Zn(2+) is required as a cofactor.

It is found in the cytoplasm. Its function is as follows. One of several proteins that assist in the late maturation steps of the functional core of the 30S ribosomal subunit. Helps release RbfA from mature subunits. May play a role in the assembly of ribosomal proteins into the subunit. Circularly permuted GTPase that catalyzes slow GTP hydrolysis, GTPase activity is stimulated by the 30S ribosomal subunit. The protein is Small ribosomal subunit biogenesis GTPase RsgA of Neisseria gonorrhoeae (strain NCCP11945).